We begin with the raw amino-acid sequence, 238 residues long: DNA damage-regulated autophagy modulator protein 1 (238 aa).

Helical transmembrane passes span 9 to 29 (AFVP…SYVV), 53 to 73 (SGIF…TMYT), 91 to 111 (VFNL…GIVA), 116 to 136 (LAVP…GVVY), 161 to 181 (MAIS…ASLI), and 200 to 220 (VSAI…LTFI).

This sequence belongs to the DRAM/TMEM150 family.

It is found in the lysosome membrane. In terms of biological role, lysosomal modulator of autophagy that plays a central role in p53/TP53-mediated apoptosis. Not involved in p73/TP73-mediated autophagy. The chain is DNA damage-regulated autophagy modulator protein 1 (Dram1) from Mus musculus (Mouse).